Consider the following 224-residue polypeptide: Ribonuclease HII (224 aa).

Residues 1–210 form the RNase H type-2 domain; the sequence is MKIGGIDEAG…VRKIEESIKA (210 aa). 3 residues coordinate a divalent metal cation: D7, E8, and D105.

Belongs to the RNase HII family. The cofactor is Mn(2+). It depends on Mg(2+) as a cofactor.

The protein localises to the cytoplasm. It catalyses the reaction Endonucleolytic cleavage to 5'-phosphomonoester.. Its function is as follows. Endonuclease that specifically degrades the RNA of RNA-DNA hybrids. In Pyrococcus furiosus (strain ATCC 43587 / DSM 3638 / JCM 8422 / Vc1), this protein is Ribonuclease HII.